We begin with the raw amino-acid sequence, 132 residues long: uncharacterized protein (132 aa).

Functionally, the presence of the two linear plasmids, termed pGKL1 and pGKL2, in strains of Kluyveromyces lactis confers the killer phenotype to the host cell, by promoting the secretion of a toxin able to inhibit the growth of sensitive strains. This is an uncharacterized protein from Kluyveromyces lactis (strain ATCC 8585 / CBS 2359 / DSM 70799 / NBRC 1267 / NRRL Y-1140 / WM37) (Yeast).